A 110-amino-acid chain; its full sequence is UPF0122 protein LMOf2365_1829 (110 aa).

The protein belongs to the UPF0122 family.

Functionally, might take part in the signal recognition particle (SRP) pathway. This is inferred from the conservation of its genetic proximity to ftsY/ffh. May be a regulatory protein. In Listeria monocytogenes serotype 4b (strain F2365), this protein is UPF0122 protein LMOf2365_1829.